The primary structure comprises 418 residues: Putative ion-transport protein YfeO (418 aa).

12 consecutive transmembrane segments (helical) span residues 10-30 (LLLSLPAVAIGITSSLILIMV), 54-74 (DSPLWIIGVLTLTGIAVGLVI), 99-119 (ALPGLIVALILGLAGGVSLGP), 120-140 (EHPIITVNIALAVAIGARLLP), 149-169 (ILASAGTIGALFGTTVAAALI), 186-206 (LFAPLMAAAAGALTTGLFFHP), 223-243 (ILSGAIVAAIAIAAGMVAVWC), 258-278 (VFVLGIGGFILGILGVIGGPV), 300-320 (DYFLLAVIKLAALVVAAASGF), 322-342 (GGRIFPAVFVGVALGLMLHEH), 343-363 (VPAVPAAITVSCAILGIVLVV), and 371-391 (LFMAAVVVPNTTLLPLLCIVM).

Belongs to the chloride channel (TC 2.A.49) family.

Its subcellular location is the cell membrane. The sequence is that of Putative ion-transport protein YfeO from Escherichia coli O127:H6 (strain E2348/69 / EPEC).